The sequence spans 395 residues: Major outer membrane porin, serovar F (395 aa).

Positions 1 to 22 (MKKLLKSVLVFAALSSASSLQA) are cleaved as a signal peptide.

This sequence belongs to the chlamydial porin (CP) (TC 1.B.2) family. As to quaternary structure, part of a disulfide cross-linked outer membrane complex (COMC) composed of the major outer membrane porin (MOMP), the small cysteine-rich protein (OmcA) and the large cysteine-rich periplasmic protein (OmcB).

Its subcellular location is the cell outer membrane. In terms of biological role, in elementary bodies (EBs, the infectious stage, which is able to survive outside the host cell) provides the structural integrity of the outer envelope through disulfide cross-links with the small cysteine-rich protein and the large cysteine-rich periplasmic protein. It has been described in publications as the Sarkosyl-insoluble COMC (Chlamydia outer membrane complex), and serves as the functional equivalent of peptidoglycan. Functionally, permits diffusion of specific solutes through the outer membrane. The polypeptide is Major outer membrane porin, serovar F (ompA) (Chlamydia trachomatis).